A 344-amino-acid chain; its full sequence is MIEKIKLTQFTKSAGUAAKIGPEALAQVLCQLEITWNENLLVGLNTNDDAAVYRLNEDIAIVHTVDYFTPVVDDPYDFGQIAAANALSDVYAMGAVPLFALNVVCFPAAYIDVLKEVLRGGNDKVKEAGALIAGGHTIEDEEPKYGLSVTGIVHPEKVIKNSTAKPGDVLILTKPLGIGVINTAIKGEMCPSETYLLAVEVMKYLNKEASEIMKEVGVNACTDITGFGLLGHAYEMAFSSGVTIEFDKDSIPLIEGARELAQMGLIPGGCYRNKKYLKGKVCIKVEEDEVIDLMFDPQTSGGLLISVSEEKAEELYRRLNKKLKFGAFIVGRVKEKQEYDIYVR.

The active site involves Sec-16. A non-standard amino acid (selenocysteine) is located at residue Sec-16. ATP is bound by residues Lys-19 and Thr-46–Asp-48. Asp-49 lines the Mg(2+) pocket. ATP is bound by residues Asp-66, Asp-89, and Gly-135 to Thr-137. Asp-89 lines the Mg(2+) pocket. Position 223 (Asp-223) interacts with Mg(2+).

Belongs to the selenophosphate synthase 1 family. Class I subfamily. Homodimer. Mg(2+) serves as cofactor.

It catalyses the reaction hydrogenselenide + ATP + H2O = selenophosphate + AMP + phosphate + 2 H(+). Its function is as follows. Synthesizes selenophosphate from selenide and ATP. In Caldanaerobacter subterraneus subsp. tengcongensis (strain DSM 15242 / JCM 11007 / NBRC 100824 / MB4) (Thermoanaerobacter tengcongensis), this protein is Selenide, water dikinase.